The primary structure comprises 265 residues: NAD-capped RNA hydrolase NudC (265 aa).

Residue Arg76 participates in substrate binding. Positions 106, 109, 124, and 127 each coordinate Zn(2+). Tyr132 is a substrate binding site. One can recognise a Nudix hydrolase domain in the interval 133–256 (PRISPAMMVL…SIAHRLIRHA (124 aa)). 3 residues coordinate a divalent metal cation: Ala166, Glu182, and Glu186. Residues 167–188 (GFVEPGETLEECVHRETWEEVG) carry the Nudix box motif. Residue 200-207 (QSWPFPHS) coordinates substrate. Glu227 contributes to the a divalent metal cation binding site. Ala249 is a substrate binding site.

Belongs to the Nudix hydrolase family. NudC subfamily. In terms of assembly, homodimer. Requires Mg(2+) as cofactor. Mn(2+) serves as cofactor. The cofactor is Zn(2+).

The enzyme catalyses a 5'-end NAD(+)-phospho-ribonucleoside in mRNA + H2O = a 5'-end phospho-adenosine-phospho-ribonucleoside in mRNA + beta-nicotinamide D-ribonucleotide + 2 H(+). The catalysed reaction is NAD(+) + H2O = beta-nicotinamide D-ribonucleotide + AMP + 2 H(+). It carries out the reaction NADH + H2O = reduced beta-nicotinamide D-ribonucleotide + AMP + 2 H(+). In terms of biological role, mRNA decapping enzyme that specifically removes the nicotinamide adenine dinucleotide (NAD) cap from a subset of mRNAs by hydrolyzing the diphosphate linkage to produce nicotinamide mononucleotide (NMN) and 5' monophosphate mRNA. The NAD-cap is present at the 5'-end of some mRNAs and stabilizes RNA against 5'-processing. Has preference for mRNAs with a 5'-end purine. Catalyzes the hydrolysis of a broad range of dinucleotide pyrophosphates. This Chromobacterium violaceum (strain ATCC 12472 / DSM 30191 / JCM 1249 / CCUG 213 / NBRC 12614 / NCIMB 9131 / NCTC 9757 / MK) protein is NAD-capped RNA hydrolase NudC.